The chain runs to 414 residues: Seminal vesicle secretory protein 2 (414 aa).

The signal sequence occupies residues 1–22; it reads MKSSVFILSLFLLLERQAAVVG. Gln23 is subject to Pyrrolidone carboxylic acid. 13 consecutive repeat copies span residues 108-120, 127-139, 140-152, 153-165, 166-178, 179-191, 192-204, 205-217, 224-236, 237-249, 257-269, 275-287, and 299-311. The segment at 108–311 is 13 X 13 AA tandem repeats; sequence ESQIKSFRQV…LKSFGQQKSL (204 aa). Disordered stretches follow at residues 170-228, 240-294, and 306-369; these read KSYG…GQMK, AKSF…SFSQ, and GQQK…FGQE. Residues 240–259 are compositionally biased toward polar residues; that stretch reads AKSFGQVKSQSGQMKSSYGQ. Over residues 277–294 the composition is skewed to low complexity; the sequence is QLKSYGQQKSQKQSSFSQ. Polar residues-rich tracts occupy residues 306-321 and 342-351; these read GQQK…TQQK and SVQQKSTQQM. Over residues 358 to 369 the composition is skewed to low complexity; the sequence is SQFGQQRQFGQE.

In terms of processing, the repeating unit appears to be involved in the formation of the copulatory plug via a transglutaminase reaction cross-linking glutamine and lysine residues.

The rat seminal vesicle contains six major androgen-dependent secretory proteins referred to as SVS I-VI. The SVS I-III proteins appear to be components of the rat copulatory plug, with the SVS II protein being the major component. The polypeptide is Seminal vesicle secretory protein 2 (Svs2) (Rattus norvegicus (Rat)).